We begin with the raw amino-acid sequence, 184 residues long: Oligoribonuclease (184 aa).

Positions 10 to 172 (LVWVDCEMTG…ADVLESIAEL (163 aa)) constitute an Exonuclease domain. Residue tyrosine 129 is part of the active site.

Belongs to the oligoribonuclease family.

It is found in the cytoplasm. Functionally, 3'-to-5' exoribonuclease specific for small oligoribonucleotides. This Tropheryma whipplei (strain Twist) (Whipple's bacillus) protein is Oligoribonuclease.